The primary structure comprises 308 residues: Tetraacyldisaccharide 4'-kinase (308 aa).

63-70 provides a ligand contact to ATP; sequence SFGGNGKT.

It belongs to the LpxK family.

The catalysed reaction is a lipid A disaccharide + ATP = a lipid IVA + ADP + H(+). It functions in the pathway glycolipid biosynthesis; lipid IV(A) biosynthesis; lipid IV(A) from (3R)-3-hydroxytetradecanoyl-[acyl-carrier-protein] and UDP-N-acetyl-alpha-D-glucosamine: step 6/6. In terms of biological role, transfers the gamma-phosphate of ATP to the 4'-position of a tetraacyldisaccharide 1-phosphate intermediate (termed DS-1-P) to form tetraacyldisaccharide 1,4'-bis-phosphate (lipid IVA). This is Tetraacyldisaccharide 4'-kinase from Campylobacter jejuni (strain RM1221).